The sequence spans 373 residues: Forkhead box protein E1 (373 aa).

The interval 19–51 (KEERGETAAGAGVPGEATGRGAGGRRRKRPLQR) is disordered. A compositionally biased stretch (basic residues) spans 41-50 (GGRRRKRPLQ). A DNA-binding region (fork-head) is located at residues 53-147 (KPPYSYIALI…ESGSFLRRRK (95 aa)).

In terms of processing, phosphorylated. In terms of tissue distribution, detected in adult brain, placenta, lung, liver, skeletal muscle, kidney, pancreas, heart, colon, small intestine testis and thymus. Expression was strongest in heart and pancreas.

It is found in the nucleus. Its function is as follows. Transcription factor that binds consensus sites on a variety of gene promoters and activate their transcription. Involved in proper palate formation, most probably through the expression of MSX1 and TGFB3 genes which are direct targets of this transcription factor. Also implicated in thyroid gland morphogenesis. May indirectly play a role in cell growth and migration through the regulation of WNT5A expression. The polypeptide is Forkhead box protein E1 (FOXE1) (Homo sapiens (Human)).